A 138-amino-acid chain; its full sequence is Diuretic hormone 1 (138 aa).

Residues 1–19 form the signal peptide; it reads MMWWAIWCVMVVVSSAASA. Residues 20–78 constitute a propeptide that is removed on maturation; sequence APAPDSAPMDLVQIDSAGPDDESLGYAVSSLEGRYGAEAPWLYLLAEMPRDSQIGRAAV. At Ile121 the chain carries Isoleucine amide. Residues 125-138 constitute a propeptide that is removed on maturation; the sequence is GLQWSRSEQPSAYY.

It belongs to the sauvagine/corticotropin-releasing factor/urotensin I family.

It is found in the secreted. Regulation of fluid secretion. In Manduca sexta (Tobacco hawkmoth), this protein is Diuretic hormone 1.